Consider the following 286-residue polypeptide: UDP-3-O-acyl-N-acetylglucosamine deacetylase (286 aa).

Positions 79, 237, and 241 each coordinate Zn(2+). Histidine 264 serves as the catalytic Proton donor.

Belongs to the LpxC family. Zn(2+) is required as a cofactor.

The enzyme catalyses a UDP-3-O-[(3R)-3-hydroxyacyl]-N-acetyl-alpha-D-glucosamine + H2O = a UDP-3-O-[(3R)-3-hydroxyacyl]-alpha-D-glucosamine + acetate. It participates in glycolipid biosynthesis; lipid IV(A) biosynthesis; lipid IV(A) from (3R)-3-hydroxytetradecanoyl-[acyl-carrier-protein] and UDP-N-acetyl-alpha-D-glucosamine: step 2/6. Catalyzes the hydrolysis of UDP-3-O-myristoyl-N-acetylglucosamine to form UDP-3-O-myristoylglucosamine and acetate, the committed step in lipid A biosynthesis. In Chlamydia muridarum (strain MoPn / Nigg), this protein is UDP-3-O-acyl-N-acetylglucosamine deacetylase.